Consider the following 86-residue polypeptide: Maxadilan (86 aa).

Positions 1–23 (MKQILLISLVVVLAVFAFNVAEG) are cleaved as a signal peptide. Cystine bridges form between C24–C28 and C37–C74.

In terms of assembly, interacts with human ADCYAP1R1. Salivary gland (at protein level).

It localises to the secreted. Potent vasodilator. Activates mammalian ADCYAP1R1, a PAC1 receptor, and induces cAMP accumulation in host cells. Causes the development of erythema following superficial injection into the rabbit or human skin. Influences adaptive immune responses mediated by host dendritic cells. Reduces surface expression of CD80 on host dendritic cells stimulated with lipopolysaccharides (LPS) and induces concomitant increase in CD86 expression on a subpopulation of these cells. Redirects cytokine secretion by LPS-activated host dendritic cells toward type 2 responses: decreases secretion of TNF-alpha/TNF, IL-12p40/IL12B and IFN-gamma/IFNG, and increases secretion of IL6 and IL10. Reduces ability of host bone marrow-derived dendritic cells to stimulate proliferation of CD4(+) T-cells. Reprograms the effect of LPS-activated host dendritic cells on cytokine secretion profiles in host T-cells: decreases secretion of TNF-alpha/TNF and IFN-gamma/IFNG, increases secretion of IL6 and IL13, and increases secretion of pro-inflammatory cytokine IL-1beta/IL1B in mixed lymphocyte reaction (MLR) cultures. Reduces LPS-induced up-regulation of CCR7 in activated host dendritic cells. Inhibits IFN-gamma/IFNG and IL-12p40/IL12B production by human peripheral blood mononuclear cells. Increases IL6 and decreases TNF-alpha/TNF production by LPS-stimulated human monocytes. In terms of biological role, (Microbial infection) Probably plays a critical role in the enhancement of Leishmania infectivity in the host attributed to sand fly saliva. This chain is Maxadilan, found in Lutzomyia longipalpis (Sand fly).